Here is a 125-residue protein sequence, read N- to C-terminus: MPKKSFQRTERISVQIRRDLGAFVQAAVRDHGLPSMSVSDVEVTRDMAHAKVFVTALQAERSFEAVAGLKALARELRMQLAQTMRLRFVPELHFHYDDSLDRGERIDTLLRDLIPPADAEKDESG.

The protein belongs to the RbfA family. In terms of assembly, monomer. Binds 30S ribosomal subunits, but not 50S ribosomal subunits or 70S ribosomes.

The protein resides in the cytoplasm. In terms of biological role, one of several proteins that assist in the late maturation steps of the functional core of the 30S ribosomal subunit. Associates with free 30S ribosomal subunits (but not with 30S subunits that are part of 70S ribosomes or polysomes). Required for efficient processing of 16S rRNA. May interact with the 5'-terminal helix region of 16S rRNA. The chain is Ribosome-binding factor A from Xylella fastidiosa (strain M23).